The sequence spans 234 residues: Leucyl/phenylalanyl-tRNA--protein transferase (234 aa).

Belongs to the L/F-transferase family.

It is found in the cytoplasm. The enzyme catalyses N-terminal L-lysyl-[protein] + L-leucyl-tRNA(Leu) = N-terminal L-leucyl-L-lysyl-[protein] + tRNA(Leu) + H(+). It carries out the reaction N-terminal L-arginyl-[protein] + L-leucyl-tRNA(Leu) = N-terminal L-leucyl-L-arginyl-[protein] + tRNA(Leu) + H(+). It catalyses the reaction L-phenylalanyl-tRNA(Phe) + an N-terminal L-alpha-aminoacyl-[protein] = an N-terminal L-phenylalanyl-L-alpha-aminoacyl-[protein] + tRNA(Phe). Functions in the N-end rule pathway of protein degradation where it conjugates Leu, Phe and, less efficiently, Met from aminoacyl-tRNAs to the N-termini of proteins containing an N-terminal arginine or lysine. The protein is Leucyl/phenylalanyl-tRNA--protein transferase of Shigella dysenteriae serotype 1 (strain Sd197).